The following is a 1282-amino-acid chain: Ribosome biogenesis protein BMS1 homolog (1282 aa).

Residues 1–24 (MEAKDQKKHRKKNSGPKAAKKKKR) are compositionally biased toward basic residues. The interval 1–43 (MEAKDQKKHRKKNSGPKAAKKKKRLLQDLQLGDEEDARKRNPK) is disordered. Lys-43 participates in a covalent cross-link: Glycyl lysine isopeptide (Lys-Gly) (interchain with G-Cter in SUMO2). One can recognise a Bms1-type G domain in the interval 80–245 (PPPIVVVVMG…GRFITVMKFR (166 aa)). A G1 region spans residues 89–96 (GPPKVGKS). Position 89 to 96 (89 to 96 (GPPKVGKS)) interacts with ATP. Positions 117–121 (PVTIV) are G2. The G3 stretch occupies residues 132 to 135 (ECGC). The interval 184-187 (THLD) is G4. Position 188 is a phosphoserine (Ser-188). A G5 region spans residues 219–228 (LSGMVHGEYQ). Disordered stretches follow at residues 397–557 (DSKP…ANCQ) and 575–667 (PTFD…ALKW). Residues Lys-399 and Lys-415 each participate in a glycyl lysine isopeptide (Lys-Gly) (interchain with G-Cter in SUMO2) cross-link. Acidic residues-rich tracts occupy residues 434-472 (GDED…ENAE) and 503-531 (DSDD…EDCT). The segment covering 535 to 550 (KGISGSKAAGEGSKAG) has biased composition (low complexity). Position 552 is a phosphoserine (Ser-552). Residues 588 to 610 (FASEDESEESSSLSAEEEDSENE) show a composition bias toward acidic residues. Phosphoserine occurs at positions 625 and 639. Lys-646 participates in a covalent cross-link: Glycyl lysine isopeptide (Lys-Gly) (interchain with G-Cter in SUMO2). The segment covering 653–667 (EENNDSKETSGALKW) has biased composition (basic and acidic residues). The residue at position 708 (Thr-708) is a Phosphothreonine. Disordered stretches follow at residues 787–822 (ETGD…ESAK) and 1178–1202 (NKPK…IREP). A Glycyl lysine isopeptide (Lys-Gly) (interchain with G-Cter in SUMO1); alternate cross-link involves residue Lys-810. A Glycyl lysine isopeptide (Lys-Gly) (interchain with G-Cter in SUMO2); alternate cross-link involves residue Lys-810. Residue Lys-1206 forms a Glycyl lysine isopeptide (Lys-Gly) (interchain with G-Cter in SUMO2) linkage. Residues 1219-1282 (SQKMKKAKEQ…SLKGAEGQLQ (64 aa)) form a disordered region. Basic and acidic residues predominate over residues 1228–1248 (QRHLHNKEHFRAKQKEEEEKL). Residues 1249–1259 (KRQKDLRKKLF) show a composition bias toward basic residues.

This sequence belongs to the TRAFAC class translation factor GTPase superfamily. Bms1-like GTPase family. BMS1 subfamily. As to quaternary structure, part of the small subunit (SSU) processome, composed of more than 70 proteins and the RNA chaperone small nucleolar RNA (snoRNA) U3. Interacts with RCL1.

The protein resides in the nucleus. The protein localises to the nucleolus. It catalyses the reaction GTP + H2O = GDP + phosphate + H(+). GTPase required for the synthesis of 40S ribosomal subunits and for processing of pre-ribosomal RNA (pre-rRNA) at sites A0, A1, and A2. Controls access of pre-rRNA intermediates to RCL1 during ribosome biogenesis by binding RCL1 in a GTP-dependent manner, and delivering it to pre-ribosomes. GTP-binding and/or GTP hydrolysis may induce conformational rearrangements within the BMS1-RCL1 complex allowing the interaction of RCL1 with its RNA substrate. Required for RCL1 import into the nucleus. The chain is Ribosome biogenesis protein BMS1 homolog from Homo sapiens (Human).